Reading from the N-terminus, the 803-residue chain is MEAEGSSVPARAGSHEGSDSSGGAALKAPKHLWRHEQHHQYPLRQPQFRLLHPHHHLPPPPPPSPQPQLQPPPPPPLPPPPPPPGATRGRYASSGASRVRHRGYSDTERYLYCRAMDRTSYAVETGHRPGLKKSRMSWPSSFQGLRRFDVDNGTSAGRSPLDPMTSPGSGLILQANFVHSQRRESFLYRSDSDYDLSPKSMSRNSSIASDIHGDDLIVTPFAQVLASLRTVRNNFAALTNLQDRAPSKRSPMCNQPSINKATITEEAYQKLASETLEELDWCLDQLETLQTRHSVSEMASNKFKRMLNRELTHLSEMSRSGNQVSEYISNTFLDKQHEVEIPSPTQKEKEKKKRPMSQISGVKKLMHSSSLTNSCIPRFGVKTEQEDVLAKELEDVNKWGLHVFRIAELSGNRPLTVIMHTIFQERDLLKTFKIPVDTLITYLMTLEDHYHADVAYHNNIHAADVVQSTHVLLSTPALEAVFTDLEILAAIFASAIHDVDHPGVSNQFLINTNSELALMYNDSSVLENHHLAVGFKLLQEENCDIFQNLTKKQRQSLRKMAIDIVLATDMSKHMNLLADLKTMVETKKVTSSGVLLLDNYSDRIQVLQNMVHCADLSNPTKPLQLYRQWTDRIMEEFFRQGDRERERGMEISPMCDKHNASVEKSQVGFIDYIVHPLWETWADLVHPDAQDILDTLEDNREWYQSTIPQSPSPAPDDQEDGRQGQTEKFQFELTLEEDGESDTEKDSGSQVEEDTSCSDSKTLCTQDSESTEIPLDEQVEEEAVAEEESQPQTGVADDCCPDT.

Residues Met1–Gly103 form a disordered region. His52 and His56 each carry phosphoserine. The span at Pro58–Gly85 shows a compositional bias: pro residues. A phosphoserine mark is found at Ser137, Ser294, Ser296, Ser343, and Ser370. Residues Glu338–Gln358 are disordered. The PDEase domain occupies Val381–Ser710. A Glycyl lysine isopeptide (Lys-Gly) (interchain with G-Cter in SUMO) cross-link involves residue Lys382. The active-site Proton donor is the His457. His457 lines the 3',5'-cyclic AMP pocket. His457 is a binding site for AMP. Zn(2+)-binding residues include His461, His497, Asp498, and Asp615. The AMP site is built by Asp498, Asp615, Asn618, Gln666, and Phe669. Asp498 is a Mg(2+) binding site. Asp498 lines the Mn(2+) pocket. 3',5'-cyclic AMP is bound by residues Gln666 and Phe669. Disordered stretches follow at residues Ser705 to Gly724 and Glu732 to Thr803. Over residues Cys757–Ser768 the composition is skewed to polar residues. Over residues Pro774–Ser789 the composition is skewed to acidic residues.

The protein belongs to the cyclic nucleotide phosphodiesterase family. PDE4 subfamily. Homodimer for the long isoforms. Isoforms with truncated N-termini are monomeric. Binds ARRB2. Isoform 33 is part of a ternary complex containing PRKAR2A, PRKAR2B and AKAP9. Identified in a complex composed of RYR1, PDE4D, PKA, FKBP1A and protein phosphatase 1 (PP1). Interacts with PDE4DIP. Isoform 5 interacts (via N-terminal region) with SHANK2 (via proline-rich region); the interaction is increased in a PKA-dependent manner. Isoform 33, isoform 4, isoform 7, isoform 8 and isoform 9 but not isoform 32 and isoform 6 interact with SHANK2. Isoform 31 interacts weakly with SHANK2. The cofactor is Zn(2+). Requires Mg(2+) as cofactor. It depends on Mn(2+) as a cofactor. Post-translationally, isoform 1 and isoform 9 are rapidly activated by PKA through phosphorylation. Long isoforms that share a conserved PKA phosphorylation site in the N-terminus are also activated. Sumoylation of long isoforms by PIAS4 augments their activation by PKA phosphorylation and represses their inhibition by ERK phosphorylation. In terms of tissue distribution, expressed in epithelial cells. Isoform 33, isoform 4, isoform 5 and isoform 9 are expressed in brain. Isoform 33, isoform 5, isoform 8 and isoform 9 are expressed in heart (at protein level). Isoform 4 and isoform 6 are strongly expressed in cortex and cerebellum. Isoform 7 is strongly expressed in cortex and testis; weakly expressed in kidney, lung, spleen and cerebellum. Isoform 8 is strongly expressed in lung, heart and liver. Isoform 31, isoform 32, isoform 33, isoform 5 and isoform 9 are widely distributed.

It localises to the apical cell membrane. The protein localises to the cytoplasm. It is found in the membrane. Its subcellular location is the cytoskeleton. The protein resides in the microtubule organizing center. It localises to the centrosome. It carries out the reaction 3',5'-cyclic AMP + H2O = AMP + H(+). The protein operates within purine metabolism; 3',5'-cyclic AMP degradation; AMP from 3',5'-cyclic AMP: step 1/1. Activated by phosphatidic acid. Inhibited by rolipram. In terms of biological role, hydrolyzes the second messenger cAMP, which is a key regulator of many important physiological processes. This is 3',5'-cyclic-AMP phosphodiesterase 4D (Pde4d) from Rattus norvegicus (Rat).